A 215-amino-acid chain; its full sequence is Small ribosomal subunit protein uS3 (215 aa).

The 69-residue stretch at 39 to 107 (VRQYLQKKLA…PVHINIEEIR (69 aa)) folds into the KH type-2 domain.

This sequence belongs to the universal ribosomal protein uS3 family. In terms of assembly, part of the 30S ribosomal subunit. Forms a tight complex with proteins S10 and S14.

In terms of biological role, binds the lower part of the 30S subunit head. Binds mRNA in the 70S ribosome, positioning it for translation. The protein is Small ribosomal subunit protein uS3 of Nitrosomonas europaea (strain ATCC 19718 / CIP 103999 / KCTC 2705 / NBRC 14298).